Reading from the N-terminus, the 470-residue chain is Alpha-1A adrenergic receptor (470 aa).

At Met1–Val27 the chain is on the extracellular side. N-linked (GlcNAc...) asparagine glycosylation is found at Asn9 and Asn12. A helical membrane pass occupies residues Val28–Val51. The Cytoplasmic segment spans residues Val52–Phe64. Residues Ile65–Ile88 traverse the membrane as a helical segment. Over Leu89–Cys99 the chain is Extracellular. Cysteines 99 and 176 form a disulfide. The chain crosses the membrane as a helical span at residues Asn100 to Val122. Topologically, residues Asp123 to Ala143 are cytoplasmic. A helical membrane pass occupies residues Leu144–Glu167. Over Pro168–Glu181 the chain is Extracellular. The chain crosses the membrane as a helical span at residues Pro182–Cys205. Topologically, residues Arg206–Thr271 are cytoplasmic. A helical transmembrane segment spans residues Leu272 to Ile295. Topologically, residues Phe296–Asp303 are extracellular. Residues Thr304–Ser327 form a helical membrane-spanning segment. Residues Asn328–Val470 are Cytoplasmic-facing. Residue Cys343 is the site of S-palmitoyl cysteine attachment. Positions Gly375–Glu416 are disordered. A compositionally biased stretch (polar residues) spans Ser381–Pro392.

The protein belongs to the G-protein coupled receptor 1 family. Adrenergic receptor subfamily. ADRA1A sub-subfamily.

Its subcellular location is the cell membrane. Its function is as follows. This alpha-adrenergic receptor mediates its action by association with G proteins that activate a phosphatidylinositol-calcium second messenger system. The protein is Alpha-1A adrenergic receptor (adra1a) of Oryzias latipes (Japanese rice fish).